The following is a 532-amino-acid chain: Exopolysaccharide phosphotransferase CpsY (532 aa).

The protein belongs to the stealth family.

In Mycobacterium bovis (strain ATCC BAA-935 / AF2122/97), this protein is Exopolysaccharide phosphotransferase CpsY (cpsY).